A 147-amino-acid chain; its full sequence is UPF0208 membrane protein CGSHiEE_06015 (147 aa).

2 helical membrane-spanning segments follow: residues 38-58 (FAQKFMPFVAVFAILWQQIYA) and 67-87 (IAILTALFALLIPFQGLYWLG).

The protein belongs to the UPF0208 family.

It localises to the cell inner membrane. In Haemophilus influenzae (strain PittEE), this protein is UPF0208 membrane protein CGSHiEE_06015.